The primary structure comprises 239 residues: Ribosomal RNA small subunit methyltransferase G (239 aa).

S-adenosyl-L-methionine is bound by residues Gly-78, Phe-83, Ala-129–Glu-130, and Arg-148.

Belongs to the methyltransferase superfamily. RNA methyltransferase RsmG family.

It is found in the cytoplasm. In terms of biological role, specifically methylates the N7 position of a guanine in 16S rRNA. This Alkaliphilus metalliredigens (strain QYMF) protein is Ribosomal RNA small subunit methyltransferase G.